A 189-amino-acid polypeptide reads, in one-letter code: Putative manganese efflux pump MntP (189 aa).

The next 6 membrane-spanning stretches (helical) occupy residues 3 to 23, 41 to 61, 62 to 82, 103 to 123, 132 to 152, and 167 to 187; these read IVST…AAVS, MIFG…GRVA, ADYV…FLGI, SFIL…SVGV, IVPV…AGVM, and IIGG…HLYG.

It belongs to the MntP (TC 9.B.29) family.

Its subcellular location is the cell inner membrane. Functionally, probably functions as a manganese efflux pump. In Methylobacillus flagellatus (strain ATCC 51484 / DSM 6875 / VKM B-1610 / KT), this protein is Putative manganese efflux pump MntP.